Here is an 883-residue protein sequence, read N- to C-terminus: Alanine--tRNA ligase (883 aa).

Residues His564, His568, Cys666, and His670 each contribute to the Zn(2+) site.

This sequence belongs to the class-II aminoacyl-tRNA synthetase family. It depends on Zn(2+) as a cofactor.

The protein resides in the cytoplasm. The enzyme catalyses tRNA(Ala) + L-alanine + ATP = L-alanyl-tRNA(Ala) + AMP + diphosphate. Its function is as follows. Catalyzes the attachment of alanine to tRNA(Ala) in a two-step reaction: alanine is first activated by ATP to form Ala-AMP and then transferred to the acceptor end of tRNA(Ala). Also edits incorrectly charged Ser-tRNA(Ala) and Gly-tRNA(Ala) via its editing domain. This is Alanine--tRNA ligase from Synechococcus sp. (strain JA-3-3Ab) (Cyanobacteria bacterium Yellowstone A-Prime).